We begin with the raw amino-acid sequence, 124 residues long: Small ribosomal subunit protein uS12 (124 aa).

Position 89 is a 3-methylthioaspartic acid (Asp-89).

The protein belongs to the universal ribosomal protein uS12 family. As to quaternary structure, part of the 30S ribosomal subunit. Contacts proteins S8 and S17. May interact with IF1 in the 30S initiation complex.

Functionally, with S4 and S5 plays an important role in translational accuracy. Its function is as follows. Interacts with and stabilizes bases of the 16S rRNA that are involved in tRNA selection in the A site and with the mRNA backbone. Located at the interface of the 30S and 50S subunits, it traverses the body of the 30S subunit contacting proteins on the other side and probably holding the rRNA structure together. The combined cluster of proteins S8, S12 and S17 appears to hold together the shoulder and platform of the 30S subunit. The chain is Small ribosomal subunit protein uS12 from Shewanella loihica (strain ATCC BAA-1088 / PV-4).